Consider the following 35-residue polypeptide: Riboflavin-binding protein (35 aa).

Cys5 and Cys32 are oxidised to a cystine.

This sequence belongs to the folate receptor family.

Its function is as follows. Required for the transport of riboflavin to the developing oocyte. The chain is Riboflavin-binding protein from Struthio camelus (Common ostrich).